A 391-amino-acid polypeptide reads, in one-letter code: MKLNPNDVVIIDAVRSPMGKTKNGVFRNVRAENLSAALVKELFKRNPNVDQKDVEDLIWGCVNQTLEQGFNMARAVSLLAGLPITCAAQTVNRLCGSSMSAIHTAAQAIMTGQGDVFVVGGVEHMGHVGMMHGVDVNPALSKHMAKASMMMGVTAEMLGKMHGVSREDQDAFAVRSHRLAHEATLQGRFNNEIVSIEGHDADGNKILVEVDEVIRPETSMESLAKLAPVFMPKVGTVTAGTSSALSDGASAMLMMSAKKAEELGLTPIAKVRSMAVAGCDPAIMGYGPVPATKKALKRAGLTIADIDIVELNEAFAAQSIPVLKDLGLLDLVDDKVNLNGGAIALGHPLGCSGTRISTTLLNVMREKDATVGLATMCIGMGQGIATVFERV.

Cys-95 (acyl-thioester intermediate) is an active-site residue. Active-site proton acceptor residues include His-347 and Cys-377.

It belongs to the thiolase-like superfamily. Thiolase family. As to quaternary structure, heterotetramer of two alpha chains (FadB) and two beta chains (FadA).

It is found in the cytoplasm. It carries out the reaction an acyl-CoA + acetyl-CoA = a 3-oxoacyl-CoA + CoA. Its pathway is lipid metabolism; fatty acid beta-oxidation. In terms of biological role, catalyzes the final step of fatty acid oxidation in which acetyl-CoA is released and the CoA ester of a fatty acid two carbons shorter is formed. The polypeptide is 3-ketoacyl-CoA thiolase (Marinomonas sp. (strain MWYL1)).